A 406-amino-acid polypeptide reads, in one-letter code: Aminomethyltransferase, mitochondrial (406 aa).

The transit peptide at 1–29 (MRGGLWQLGQSITRRLAQADKKTIGRRCF) directs the protein to the mitochondrion. Residues E234, R265, and Y403 each coordinate substrate.

The protein belongs to the GcvT family. As to quaternary structure, the glycine cleavage system is composed of four proteins: P, T, L and H.

The protein localises to the mitochondrion. It catalyses the reaction N(6)-[(R)-S(8)-aminomethyldihydrolipoyl]-L-lysyl-[protein] + (6S)-5,6,7,8-tetrahydrofolate = N(6)-[(R)-dihydrolipoyl]-L-lysyl-[protein] + (6R)-5,10-methylene-5,6,7,8-tetrahydrofolate + NH4(+). Functionally, the glycine cleavage system catalyzes the degradation of glycine. This is Aminomethyltransferase, mitochondrial (GDCST) from Solanum tuberosum (Potato).